Reading from the N-terminus, the 295-residue chain is GTPase Era (295 aa).

The Era-type G domain occupies 7–176 (KTISVCIIGR…IKSKAKVSPW (170 aa)). Positions 15 to 22 (GRPNSGKS) are G1. 15 to 22 (GRPNSGKS) contacts GTP. Residues 41-45 (QTTRS) are G2. The G3 stretch occupies residues 62–65 (DTPG). Residues 62–66 (DTPGI) and 124–127 (NKID) contribute to the GTP site. Residues 124-127 (NKID) form a G4 region. The G5 stretch occupies residues 152 to 154 (ISA). One can recognise a KH type-2 domain in the interval 204 to 281 (LQQELPYKLT…HLFLFVKVHA (78 aa)).

Belongs to the TRAFAC class TrmE-Era-EngA-EngB-Septin-like GTPase superfamily. Era GTPase family. As to quaternary structure, monomer.

It is found in the cytoplasm. Its subcellular location is the cell inner membrane. Its function is as follows. An essential GTPase that binds both GDP and GTP, with rapid nucleotide exchange. Plays a role in 16S rRNA processing and 30S ribosomal subunit biogenesis and possibly also in cell cycle regulation and energy metabolism. The sequence is that of GTPase Era from Rickettsia typhi (strain ATCC VR-144 / Wilmington).